Here is a 330-residue protein sequence, read N- to C-terminus: NADH-quinone oxidoreductase subunit H (330 aa).

8 consecutive transmembrane segments (helical) span residues 11 to 31 (ILVAVLKAIVILLAVVVCGAL), 81 to 101 (FIFVLAPMIAFAAMLMAFAII), 114 to 134 (IGILFFFAMAGLSVYAVLFAG), 154 to 174 (ISYEVFLALALMGVVAQVGSF), 187 to 207 (LWFIIPQFFGFCTFFIAGVAV), 238 to 258 (FFVGEYVGIVTISALLVTLFF), 270 to 290 (QIPFFWFALKTAFFIMIFILL), and 309 to 329 (FCLPLTLINLLVTGALVLAAA).

It belongs to the complex I subunit 1 family. In terms of assembly, NDH-1 is composed of 13 different subunits. Subunits NuoA, H, J, K, L, M, N constitute the membrane sector of the complex.

It is found in the cell inner membrane. It carries out the reaction a quinone + NADH + 5 H(+)(in) = a quinol + NAD(+) + 4 H(+)(out). Functionally, NDH-1 shuttles electrons from NADH, via FMN and iron-sulfur (Fe-S) centers, to quinones in the respiratory chain. The immediate electron acceptor for the enzyme in this species is believed to be ubiquinone. Couples the redox reaction to proton translocation (for every two electrons transferred, four hydrogen ions are translocated across the cytoplasmic membrane), and thus conserves the redox energy in a proton gradient. This subunit may bind ubiquinone. This Ectopseudomonas mendocina (strain ymp) (Pseudomonas mendocina) protein is NADH-quinone oxidoreductase subunit H.